Reading from the N-terminus, the 1001-residue chain is Translation initiation factor IF-2 (1001 aa).

The disordered stretch occupies residues 34 to 404 (KSHSSTISES…SRGDRRDRKE (371 aa)). Positions 67–80 (SRPESKEDKSDPKQ) are enriched in basic and acidic residues. Composition is skewed to pro residues over residues 98–107 (PARPTPPPRP), 147–157 (PTQPLAPPPVP), and 163–172 (PSKPAPPTPP). Over residues 173–190 (AKKAAPAPRLAGPPGRTA) the composition is skewed to low complexity. Basic and acidic residues-rich tracts occupy residues 212–230 (SLKD…EEKV) and 238–252 (PKPK…PPRP). The span at 332-342 (DDDDDDLDIDG) shows a compositional bias: acidic residues. Low complexity-rich tracts occupy residues 362 to 371 (KSLAAKPSTP) and 385 to 394 (AGSSAGGSSR). Residues 395 to 404 (SRGDRRDRKE) are compositionally biased toward basic and acidic residues. One can recognise a tr-type G domain in the interval 493–666 (RRPPVVTIMG…LLVSEVEELV (174 aa)). Residues 502 to 509 (GHVDHGKT) form a G1 region. 502 to 509 (GHVDHGKT) lines the GTP pocket. Residues 527–531 (GITQH) form a G2 region. The G3 stretch occupies residues 552–555 (DTPG). Residues 552–556 (DTPGH) and 606–609 (NKVD) contribute to the GTP site. The G4 stretch occupies residues 606–609 (NKVD). Residues 642–644 (SAL) form a G5 region.

Belongs to the TRAFAC class translation factor GTPase superfamily. Classic translation factor GTPase family. IF-2 subfamily.

The protein resides in the cytoplasm. Functionally, one of the essential components for the initiation of protein synthesis. Protects formylmethionyl-tRNA from spontaneous hydrolysis and promotes its binding to the 30S ribosomal subunits. Also involved in the hydrolysis of GTP during the formation of the 70S ribosomal complex. The chain is Translation initiation factor IF-2 (infB) from Synechocystis sp. (strain ATCC 27184 / PCC 6803 / Kazusa).